The sequence spans 1146 residues: Error-prone DNA polymerase (1146 aa).

2 disordered regions span residues 1 to 43 and 154 to 178; these read MGWG…WSRK and ATPE…PPGP. The span at 12-26 shows a compositional bias: basic and acidic residues; sequence ELERVLSGRPGRTDP.

This sequence belongs to the DNA polymerase type-C family. DnaE2 subfamily.

The protein resides in the cytoplasm. The catalysed reaction is DNA(n) + a 2'-deoxyribonucleoside 5'-triphosphate = DNA(n+1) + diphosphate. Functionally, DNA polymerase involved in damage-induced mutagenesis and translesion synthesis (TLS). It is not the major replicative DNA polymerase. This chain is Error-prone DNA polymerase, found in Nocardia farcinica (strain IFM 10152).